A 576-amino-acid chain; its full sequence is Proline--tRNA ligase (576 aa).

Belongs to the class-II aminoacyl-tRNA synthetase family. ProS type 1 subfamily. In terms of assembly, homodimer.

It localises to the cytoplasm. The enzyme catalyses tRNA(Pro) + L-proline + ATP = L-prolyl-tRNA(Pro) + AMP + diphosphate. Functionally, catalyzes the attachment of proline to tRNA(Pro) in a two-step reaction: proline is first activated by ATP to form Pro-AMP and then transferred to the acceptor end of tRNA(Pro). As ProRS can inadvertently accommodate and process non-cognate amino acids such as alanine and cysteine, to avoid such errors it has two additional distinct editing activities against alanine. One activity is designated as 'pretransfer' editing and involves the tRNA(Pro)-independent hydrolysis of activated Ala-AMP. The other activity is designated 'posttransfer' editing and involves deacylation of mischarged Ala-tRNA(Pro). The misacylated Cys-tRNA(Pro) is not edited by ProRS. The sequence is that of Proline--tRNA ligase from Finegoldia magna (strain ATCC 29328 / DSM 20472 / WAL 2508) (Peptostreptococcus magnus).